Here is a 275-residue protein sequence, read N- to C-terminus: Penicillin-insensitive murein endopeptidase (275 aa).

The first 19 residues, 1–19 (MKNWIVGMVALVTMVPVMA), serve as a signal peptide directing secretion. Disulfide bonds link Cys44/Cys264, Cys187/Cys235, and Cys216/Cys223. Zn(2+) is bound by residues His110, His113, Asp120, Asp147, and His211. A disordered region spans residues 227 to 262 (DTPPPGDGCGAELESWFQPPPPSAKPGKTLPPPLPP). Positions 244–262 (QPPPPSAKPGKTLPPPLPP) are enriched in pro residues.

Belongs to the peptidase M74 family. Dimer. Requires Zn(2+) as cofactor.

It is found in the periplasm. In terms of biological role, murein endopeptidase that cleaves the D-alanyl-meso-2,6-diamino-pimelyl amide bond that connects peptidoglycan strands. Likely plays a role in the removal of murein from the sacculus. This Yersinia pestis protein is Penicillin-insensitive murein endopeptidase.